A 550-amino-acid polypeptide reads, in one-letter code: Mitochondrial distribution and morphology protein 12 (550 aa).

Residues 1–550 (MSIDLNWETV…VYPSYWTFLV (550 aa)) form the SMP-LTD domain. Disordered stretches follow at residues 76–97 (SDLASESGSEEDEEEIADDRRR), 196–386 (GHGH…KLRE), and 466–489 (ENEVDGGEGDKQTGFKSPPGGGNG). Residues 83–92 (GSEEDEEEIA) are compositionally biased toward acidic residues. The segment covering 270-286 (PPFPPSSTGGPSPPPGL) has biased composition (pro residues). Residues 288-305 (KPHHPHHPHHHHAHHAHP) show a composition bias toward basic residues. A compositionally biased stretch (basic and acidic residues) spans 327–344 (PTRDKTTPSHHPDPEDVH). Over residues 346-355 (PNTTTTNKQR) the composition is skewed to polar residues. Residues 356–371 (STSPATSSPLATSAQE) are compositionally biased toward low complexity.

Belongs to the MDM12 family. Component of the ER-mitochondria encounter structure (ERMES) or MDM complex, composed of MMM1, MDM10, MDM12 and MDM34. An MMM1 homodimer associates with one molecule of MDM12 on each side in a pairwise head-to-tail manner, and the SMP-LTD domains of MMM1 and MDM12 generate a continuous hydrophobic tunnel for phospholipid trafficking.

It is found in the mitochondrion outer membrane. The protein resides in the endoplasmic reticulum membrane. In terms of biological role, component of the ERMES/MDM complex, which serves as a molecular tether to connect the endoplasmic reticulum (ER) and mitochondria. Components of this complex are involved in the control of mitochondrial shape and protein biogenesis, and function in nonvesicular lipid trafficking between the ER and mitochondria. MDM12 is required for the interaction of the ER-resident membrane protein MMM1 and the outer mitochondrial membrane-resident beta-barrel protein MDM10. The MDM12-MMM1 subcomplex functions in the major beta-barrel assembly pathway that is responsible for biogenesis of all mitochondrial outer membrane beta-barrel proteins, and acts in a late step after the SAM complex. The MDM10-MDM12-MMM1 subcomplex further acts in the TOM40-specific pathway after the action of the MDM12-MMM1 complex. Essential for establishing and maintaining the structure of mitochondria and maintenance of mtDNA nucleoids. The sequence is that of Mitochondrial distribution and morphology protein 12 from Podospora anserina (strain S / ATCC MYA-4624 / DSM 980 / FGSC 10383) (Pleurage anserina).